The sequence spans 304 residues: Putative S-adenosyl-L-methionine-dependent methyltransferase MAP_3385 (304 aa).

S-adenosyl-L-methionine is bound by residues D129 and D158–L159.

It belongs to the UPF0677 family.

Exhibits S-adenosyl-L-methionine-dependent methyltransferase activity. The chain is Putative S-adenosyl-L-methionine-dependent methyltransferase MAP_3385 from Mycolicibacterium paratuberculosis (strain ATCC BAA-968 / K-10) (Mycobacterium paratuberculosis).